The chain runs to 200 residues: Ras-related protein Rab-10 (200 aa).

Residues serine 18, glycine 19, valine 20, glycine 21, lysine 22, threonine 23, cysteine 24, asparagine 35, threonine 36, serine 40, and threonine 41 each contribute to the GTP site. Threonine 23 provides a ligand contact to Mg(2+). 2 short sequence motifs (switch) span residues 32 to 46 (DAFN…EIDF) and 64 to 81 (DTAG…YYRG). Residues threonine 41 and aspartate 64 each coordinate Mg(2+). Glycine 67 provides a ligand contact to GTP. Threonine 73 is modified (phosphothreonine). Residue lysine 102 is modified to N6-acetyllysine. Lysine 102 participates in a covalent cross-link: Glycyl lysine isopeptide (Lys-Gly) (interchain with G-Cter in ubiquitin). GTP is bound by residues asparagine 122, lysine 123, aspartate 125, and methionine 126. Lysine 136 is covalently cross-linked (Glycyl lysine isopeptide (Lys-Gly) (interchain with G-Cter in ubiquitin)). GTP is bound by residues serine 152, alanine 153, and lysine 154. Lysine 154 is covalently cross-linked (Glycyl lysine isopeptide (Lys-Gly) (interchain with G-Cter in ubiquitin)). 2 S-geranylgeranyl cysteine lipidation sites follow: cysteine 199 and cysteine 200.

It belongs to the small GTPase superfamily. Rab family. In terms of assembly, interacts with MYO5A; mediates the transport to the plasma membrane of SLC2A4/GLUT4 storage vesicles. Interacts with GDI1 and with GDI2; negatively regulates RAB10 association with membranes and activation. Interacts (GDP-bound form) with LLGL1; the interaction is direct and promotes RAB10 association with membranes and activation through competition with the Rab inhibitor GDI1. Interacts with EXOC4; probably associates with the exocyst. Interacts (GTP-bound form) with MICALCL, MICAL1, MICAL3, EHBP1 and EHBP1L1; at least in case of MICAL1 two molecules of RAB10 can bind to one molecule of MICAL1. Interacts with TBC1D13. Interacts with SEC16A. Interacts with CHM. Interacts with LRRK2; interaction facilitates phosphorylation of Thr-73. Interacts with RILPL1 and RILPL2 when phosphorylated on Thr-73. Interacts with TBC1D21. Interacts with MARCKS. Requires Mg(2+) as cofactor. Post-translationally, phosphorylation of Thr-73 in the switch II region by LRRK2 prevents the association of RAB regulatory proteins, including CHM and RAB GDP dissociation inhibitors GDI1 and GDI2. Phosphorylation of Thr-73 by LRRK2 is stimulated by RAB29 and RAB32. Phosphorylation by LRRK2 is required for localization to stressed lysosomes. Highest levels in neural and muscle tissues.

Its subcellular location is the cytoplasmic vesicle membrane. It localises to the golgi apparatus. The protein resides in the trans-Golgi network membrane. The protein localises to the endosome membrane. It is found in the recycling endosome membrane. Its subcellular location is the cytoplasmic vesicle. It localises to the phagosome membrane. The protein resides in the cell projection. The protein localises to the cilium. It is found in the endoplasmic reticulum membrane. Its subcellular location is the cytoplasm. It localises to the perinuclear region. The protein resides in the lysosome. It carries out the reaction GTP + H2O = GDP + phosphate + H(+). Regulated by guanine nucleotide exchange factors (GEFs) DENND4C and RABIF which promote the exchange of bound GDP for free GTP. Regulated by GTPase activating proteins (GAPs) including TBC1D21 which increase the GTP hydrolysis activity. Inhibited by GDP dissociation inhibitors GDI1 and GDI2 which prevent Rab-GDP dissociation. The small GTPases Rab are key regulators of intracellular membrane trafficking, from the formation of transport vesicles to their fusion with membranes. Rabs cycle between an inactive GDP-bound form and an active GTP-bound form that is able to recruit to membranes different set of downstream effectors directly responsible for vesicle formation, movement, tethering and fusion. That Rab is mainly involved in the biosynthetic transport of proteins from the Golgi to the plasma membrane. Regulates, for instance, SLC2A4/GLUT4 glucose transporter-enriched vesicles delivery to the plasma membrane. In parallel, it regulates the transport of TLR4, a toll-like receptor to the plasma membrane and therefore may be important for innate immune response. Also plays a specific role in asymmetric protein transport to the plasma membrane. In neurons, it is involved in axonogenesis through regulation of vesicular membrane trafficking toward the axonal plasma membrane. In epithelial cells, it regulates transport from the Golgi to the basolateral membrane. May play a role in the basolateral recycling pathway and in phagosome maturation. May play a role in endoplasmic reticulum dynamics and morphology controlling tubulation along microtubules and tubules fusion. Together with LRRK2, RAB8A, and RILPL1, it regulates ciliogenesis. When phosphorylated by LRRK2 on Thr-73, it binds RILPL1 and inhibits ciliogenesis. Participates in the export of a subset of neosynthesized proteins through a Rab8-Rab10-Rab11-dependent endososomal export route. Targeted to and stabilized on stressed lysosomes through LRRK2 phosphorylation where it promotes the extracellular release of lysosomal content through EHBP1 and EHNP1L1 effector proteins. In Rattus norvegicus (Rat), this protein is Ras-related protein Rab-10.